The chain runs to 651 residues: MARGSAVAWAALGPLLWGCALGLQGGMLYPQESPSRECKELDGLWSFRADFSDNRRRGFEEQWYRRPLWESGPTVDMPVPSSFNDISQDWRLRHFVGWVWYEREVILPERWTQDLRTRVVLRIGSAHSYAIVWVNGVDTLEHEGGYLPFEADISNLVQVGPLPSRLRITIAINNTLTPTTLPPGTIQYLTDTSKYPKGYFVQNTYFDFFNYAGLQRSVLLYTTPTTYIDDITVTTSVEQDSGLVNYQISVKGSNLFKLEVRLLDAENKVVANGTGTQGQLKVPGVSLWWPYLMHERPAYLYSLEVQLTAQTSLGPVSDFYTLPVGIRTVAVTKSQFLINGKPFYFHGVNKHEDADIRGKGFDWPLLVKDFNLLRWLGANAFRTSHYPYAEEVMQMCDRYGIVVIDECPGVGLALPQFFNNVSLHHHMQVMEEVVRRDKNHPAVVMWSVANEPASHLESAGYYLKMVIAHTKSLDPSRPVTFVSNSNYAADKGAPYVDVICLNSYYSWYHDYGHLELIQLQLATQFENWYKKYQKPIIQSEYGAETIAGFHQDPPLMFTEEYQKSLLEQYHLGLDQKRRKYVVGELIWNFADFMTEQSPTRVLGNKKGIFTRQRQPKSAAFLLRERYWKIANETRYPHSVAKSQCLENSLFT.

The signal sequence occupies residues 1–22; it reads MARGSAVAWAALGPLLWGCALG. N-linked (GlcNAc...) asparagine glycosylation is found at asparagine 173, asparagine 272, and asparagine 420. Glutamate 451 acts as the Proton donor in catalysis. Asparagine 631 carries N-linked (GlcNAc...) asparagine glycosylation.

This sequence belongs to the glycosyl hydrolase 2 family. As to quaternary structure, homotetramer. In terms of processing, N-linked glycosylated with 3 to 4 oligosaccharide chains.

The protein localises to the lysosome. It catalyses the reaction a beta-D-glucuronoside + H2O = D-glucuronate + an alcohol. Its activity is regulated as follows. Inhibited by L-aspartic acid. Functionally, plays an important role in the degradation of dermatan and keratan sulfates. This Homo sapiens (Human) protein is Beta-glucuronidase (GUSB).